A 433-amino-acid polypeptide reads, in one-letter code: uncharacterized protein (433 aa).

This sequence belongs to the arrestin family.

This is an uncharacterized protein from Schizosaccharomyces pombe (strain 972 / ATCC 24843) (Fission yeast).